A 2543-amino-acid chain; its full sequence is Zinc finger FYVE domain-containing protein 26 (2543 aa).

S297 is subject to Phosphoserine. Disordered regions lie at residues 523-545 (ECRD…SLSS), 609-636 (GLLG…GCQE), 699-722 (LSSH…SRDG), and 744-820 (VTSN…GRLQ). Residues S615, S619, and S703 each carry the phosphoserine modification. Basic and acidic residues predominate over residues 699–710 (LSSHSPPEKPKL). The span at 767–776 (SLRRGRRTRR) shows a compositional bias: basic residues. Positions 786 to 806 (SNPSLESTSSELSTSTSEGSL) are enriched in low complexity. S802 is modified (phosphoserine). Residues 870–897 (MFMERYQEVIQELSRVEHKIENQNSDGG) adopt a coiled-coil conformation. The interval 1272-1299 (LSTLSSPKPTGNSTLERKPHSSPRDSSL) is disordered. Positions 1273 to 1285 (STLSSPKPTGNST) are enriched in polar residues. A phosphoserine mark is found at S1744, S1765, S1784, and S1786. The disordered stretch occupies residues 1780–1812 (STIHSPSPRERSFPESQPPPEFVPPATPPGRPQ). Positions 1795–1810 (SQPPPEFVPPATPPGR) are enriched in pro residues. The FYVE-type zinc finger occupies 1816–1876 (DESASICMVC…VCDQCYSYYN (61 aa)). Zn(2+)-binding residues include C1822, C1825, C1839, C1842, C1847, C1850, C1868, and C1871.

This sequence belongs to the ZFYVE26 family. Interacts with AP5Z1, AP5B1, AP5S1 and SPG11. Interacts with TTC19 and KIF13A.

It is found in the cytoplasm. The protein resides in the cytoskeleton. It localises to the microtubule organizing center. The protein localises to the centrosome. Its subcellular location is the midbody. Its function is as follows. Phosphatidylinositol 3-phosphate-binding protein required for the abscission step in cytokinesis: recruited to the midbody during cytokinesis and acts as a regulator of abscission. May also be required for efficient homologous recombination DNA double-strand break repair. This Ailuropoda melanoleuca (Giant panda) protein is Zinc finger FYVE domain-containing protein 26 (ZFYVE26).